The sequence spans 76 residues: Sec-independent protein translocase protein TatA (76 aa).

A helical membrane pass occupies residues 1–21; it reads MGSFSIWHWLIVLVIVMLVFG. Basic and acidic residues-rich tracts occupy residues 41–50 and 57–76; these read DGMKDGEDKG and KELR…SRQQ. A disordered region spans residues 41–76; sequence DGMKDGEDKGAQPAASKELRDSTTIDVDAKEKSRQQ.

This sequence belongs to the TatA/E family. The Tat system comprises two distinct complexes: a TatABC complex, containing multiple copies of TatA, TatB and TatC subunits, and a separate TatA complex, containing only TatA subunits. Substrates initially bind to the TatABC complex, which probably triggers association of the separate TatA complex to form the active translocon.

Its subcellular location is the cell inner membrane. Part of the twin-arginine translocation (Tat) system that transports large folded proteins containing a characteristic twin-arginine motif in their signal peptide across membranes. TatA could form the protein-conducting channel of the Tat system. The protein is Sec-independent protein translocase protein TatA of Cupriavidus taiwanensis (strain DSM 17343 / BCRC 17206 / CCUG 44338 / CIP 107171 / LMG 19424 / R1) (Ralstonia taiwanensis (strain LMG 19424)).